The sequence spans 178 residues: Fatty-acid and retinol-binding protein 1 (178 aa).

A signal peptide spans 1 to 16; it reads MYHQLILMALIGVIMA. Asn44 and Asn75 each carry an N-linked (GlcNAc...) asparagine glycan. 2 coiled-coil regions span residues 67-89 and 122-154; these read DAALEALKNKSDKLYQKAVELRN and QKLDMEKLKQAARDIIAKYEALNEETKEELKAT. Asn157 carries an N-linked (GlcNAc...) asparagine glycan.

It belongs to the fatty-acid and retinol-binding protein (FARBP) family. Post-translationally, N-glycosylated.

It is found in the secreted. In terms of biological role, binds retinol and different fatty acids. This Onchocerca ochengi (Filarial nematode worm) protein is Fatty-acid and retinol-binding protein 1.